Reading from the N-terminus, the 445-residue chain is Phosphoglucosamine mutase (445 aa).

The Phosphoserine intermediate role is filled by serine 102. Mg(2+) is bound by residues serine 102, aspartate 241, aspartate 243, and aspartate 245. Serine 102 is modified (phosphoserine).

The protein belongs to the phosphohexose mutase family. Mg(2+) serves as cofactor. Activated by phosphorylation.

The enzyme catalyses alpha-D-glucosamine 1-phosphate = D-glucosamine 6-phosphate. Functionally, catalyzes the conversion of glucosamine-6-phosphate to glucosamine-1-phosphate. This Aliivibrio salmonicida (strain LFI1238) (Vibrio salmonicida (strain LFI1238)) protein is Phosphoglucosamine mutase.